A 112-amino-acid polypeptide reads, in one-letter code: Putative pterin-4-alpha-carbinolamine dehydratase (112 aa).

The protein belongs to the pterin-4-alpha-carbinolamine dehydratase family.

The enzyme catalyses (4aS,6R)-4a-hydroxy-L-erythro-5,6,7,8-tetrahydrobiopterin = (6R)-L-erythro-6,7-dihydrobiopterin + H2O. The polypeptide is Putative pterin-4-alpha-carbinolamine dehydratase (Shewanella woodyi (strain ATCC 51908 / MS32)).